We begin with the raw amino-acid sequence, 99 residues long: Aspartyl/glutamyl-tRNA(Asn/Gln) amidotransferase subunit C (99 aa).

It belongs to the GatC family. Heterotrimer of A, B and C subunits.

It carries out the reaction L-glutamyl-tRNA(Gln) + L-glutamine + ATP + H2O = L-glutaminyl-tRNA(Gln) + L-glutamate + ADP + phosphate + H(+). The catalysed reaction is L-aspartyl-tRNA(Asn) + L-glutamine + ATP + H2O = L-asparaginyl-tRNA(Asn) + L-glutamate + ADP + phosphate + 2 H(+). Functionally, allows the formation of correctly charged Asn-tRNA(Asn) or Gln-tRNA(Gln) through the transamidation of misacylated Asp-tRNA(Asn) or Glu-tRNA(Gln) in organisms which lack either or both of asparaginyl-tRNA or glutaminyl-tRNA synthetases. The reaction takes place in the presence of glutamine and ATP through an activated phospho-Asp-tRNA(Asn) or phospho-Glu-tRNA(Gln). The sequence is that of Aspartyl/glutamyl-tRNA(Asn/Gln) amidotransferase subunit C from Solibacter usitatus (strain Ellin6076).